A 149-amino-acid polypeptide reads, in one-letter code: Large ribosomal subunit protein uL11 (149 aa).

The protein belongs to the universal ribosomal protein uL11 family. As to quaternary structure, part of the ribosomal stalk of the 50S ribosomal subunit. Interacts with L10 and the large rRNA to form the base of the stalk. L10 forms an elongated spine to which L12 dimers bind in a sequential fashion forming a multimeric L10(L12)X complex. Post-translationally, one or more lysine residues are methylated.

Functionally, forms part of the ribosomal stalk which helps the ribosome interact with GTP-bound translation factors. In Methylorubrum extorquens (strain CM4 / NCIMB 13688) (Methylobacterium extorquens), this protein is Large ribosomal subunit protein uL11.